The sequence spans 855 residues: MNESFDKDFSNHTPMMQQYLKLKAQHPEILLFYRMGDFYELFYDDAKRASQLLDISLTKRGASAGEPIPMAGIPHHAVENYLAKLVNQGESVAICEQIGDPATSKGPVERKVVRIVTPGTISDEALLQERQDNLLAAIWQDGKGYGYATLDISSGRFRLSEPADRETMAAELQRTNPAELLYAEDFAEMALIEGRRGLRRRPLWEFEIDTARQQLNLQFGTRDLVGFGVENASRGLCAAGCLLQYVKDTQRTSLPHIRSITMERQQDSIIMDAATRRNLEITQNLAGGVENTLAAVLDCTVTPMGSRMLKRWLHMPVRNTDILRERQQTIGALQDTVSELQPVLRQVGDLERILARLALRTARPRDLARMRHAFQQLPELHAQLETVDSAPVQALRKKMGDFAELRDLLERAIIDAPPVLVRDGGVIAPGYHEELDEWRALADGATDYLDRLEIRERERTGLDTLKVGYNAVHGYYIQISRGQSHLAPINYVRRQTLKNAERYIIPELKEYEDKVLTSKGKALALEKQLYDELFDLLLPHLADLQQSANALAELDVLVNLSERAWTLNYTCPTFTDKPGIRITEGRHPVVEQVLNEPFIANPLNLSPQRRMLIITGPNMGGKSTYMRQTALIALLAYIGSYVPAQNVEIGPIDRIFTRVGAADDLASGRSTFMVEMTETANILHNATENSLVLMDEIGRGTSTYDGLSLAWACAENLANKIKALTLFATHYFELTQLPEKMEGVANVHLDALEHGDTIAFMHSVQDGAASKSYGLAVAALAGVPKEVIKRARQKLRELESISPNAAATQVDGTQMSLLAAPEETSPAVEALENLDPDSLTPRQALEWIYRLKSLV.

616–623 serves as a coordination point for ATP; that stretch reads GPNMGGKS.

The protein belongs to the DNA mismatch repair MutS family.

This protein is involved in the repair of mismatches in DNA. It is possible that it carries out the mismatch recognition step. This protein has a weak ATPase activity. This chain is DNA mismatch repair protein MutS, found in Salmonella schwarzengrund (strain CVM19633).